Here is a 560-residue protein sequence, read N- to C-terminus: Nucleoprotein (560 aa).

Residues 54–236 form a binding site for the cap structure m7GTP region; sequence LRKAKRSDAD…ITRDESAVNI (183 aa). The span at 323-332 shows a compositional bias: polar residues; that stretch reads GRSWDNTSVD. The segment at 323-349 is disordered; the sequence is GRSWDNTSVDLNPKPDPGPRAPEKNGQ. Mn(2+) contacts are provided by Asp380 and Glu382. 4 residues coordinate Zn(2+): Glu390, Cys497, His500, and Cys521. Asp525 contacts Mn(2+).

Belongs to the arenaviridae nucleocapsid protein family. Homomultimerizes to form the nucleocapsid. Binds to viral genomic RNA. Interacts with glycoprotein G2. Interacts with protein Z; this interaction probably directs the encapsidated genome to budding sites. Interacts with protein L; this interaction does not interfere with Z-L interaction. Interacts with host IKBKE (via Protein kinase domain); the interaction inhibits IKBKE kinase activity.

The protein localises to the virion. Its subcellular location is the host cytoplasm. Its function is as follows. Encapsidates the genome, protecting it from nucleases. The encapsidated genomic RNA is termed the nucleocapsid (NC). Serves as template for viral transcription and replication. The increased presence of protein N in host cell does not seem to trigger the switch from transcription to replication as observed in other negative strain RNA viruses. Through the interaction with host IKBKE, strongly inhibits the phosphorylation and nuclear translocation of host IRF3, a protein involved in interferon activation pathway, leading to the inhibition of interferon-beta and IRF3-dependent promoters activation. Also encodes a functional 3'-5' exoribonuclease that degrades preferentially dsRNA substrates and thereby participates in the suppression of interferon induction. This chain is Nucleoprotein, found in Cupixi mammarenavirus (isolate Rat/Brasil/BeAn 119303/1970) (CPXV).